Reading from the N-terminus, the 1350-residue chain is Probable serine/threonine-protein kinase DDB_G0278845 (1350 aa).

8 disordered regions span residues 66-109 (RELN…NNIR), 121-159 (ENGL…PKGL), 179-249 (LANN…LNSI), 270-296 (SSIN…NEYS), 337-396 (NNYN…RDDL), 431-506 (GSTI…EKKK), 525-596 (NDSN…IPTP), and 612-701 (NNNS…NTNE). Positions 84–98 (KYLTSSHSSVVIPQD) are enriched in polar residues. 2 stretches are compositionally biased toward low complexity: residues 127–140 (SPTS…TPTT) and 181–210 (NNNN…NNSN). The span at 211-222 (KISRLINNSNTT) shows a compositional bias: polar residues. A compositionally biased stretch (low complexity) spans 223-235 (DSNASIRSSNNNN). Acidic residues predominate over residues 236–246 (DDFDNNDDEDL). 2 stretches are compositionally biased toward low complexity: residues 270–293 (SSIN…DNVN) and 337–391 (NNYN…GYNN). Polar residues predominate over residues 431–443 (GSTIFTSTSSDIA). Over residues 454–482 (NENENENENENENENENDNDSDSENENEN) the composition is skewed to acidic residues. 2 stretches are compositionally biased toward low complexity: residues 483–495 (DNSI…KSNS) and 525–551 (NDSN…PFSP). A compositionally biased stretch (polar residues) spans 565–592 (PKPTLQRQRSNSKNVLYSPNASPSNSCK). 3 stretches are compositionally biased toward low complexity: residues 612–637 (NNNS…NNID), 645–679 (NNNN…NNNN), and 690–701 (KKTPNNKINTNE). Residues 756–1082 (FTLIEKIGEG…VENIKNHIFF (327 aa)) enclose the Protein kinase domain. ATP-binding positions include 762-770 (IGEGGFGQV) and Lys-785. Residue Asp-880 is the Proton acceptor of the active site. The AGC-kinase C-terminal domain maps to 1083–1203 (NGVPWGKLHD…PRADDQPLLW (121 aa)). 4 disordered regions span residues 1129–1159 (SLLP…NDKM), 1190–1219 (GFTY…NNNN), 1232–1285 (NNNN…NKTV), and 1300–1350 (NCNN…KQQQ). Residues 1131–1142 (LPPPLPPPPQTP) show a composition bias toward pro residues. 3 stretches are compositionally biased toward low complexity: residues 1204–1219 (NNNN…NNNN), 1232–1283 (NNNN…SNNK), and 1300–1313 (NCNN…NNIN). 2 stretches are compositionally biased toward polar residues: residues 1314-1330 (TGNL…SGEN) and 1338-1350 (PTSP…KQQQ).

This sequence belongs to the protein kinase superfamily. AGC Ser/Thr protein kinase family.

The enzyme catalyses L-seryl-[protein] + ATP = O-phospho-L-seryl-[protein] + ADP + H(+). It carries out the reaction L-threonyl-[protein] + ATP = O-phospho-L-threonyl-[protein] + ADP + H(+). The polypeptide is Probable serine/threonine-protein kinase DDB_G0278845 (Dictyostelium discoideum (Social amoeba)).